Here is a 248-residue protein sequence, read N- to C-terminus: Leucyl/phenylalanyl-tRNA--protein transferase (248 aa).

The protein belongs to the L/F-transferase family.

It localises to the cytoplasm. It catalyses the reaction N-terminal L-lysyl-[protein] + L-leucyl-tRNA(Leu) = N-terminal L-leucyl-L-lysyl-[protein] + tRNA(Leu) + H(+). The catalysed reaction is N-terminal L-arginyl-[protein] + L-leucyl-tRNA(Leu) = N-terminal L-leucyl-L-arginyl-[protein] + tRNA(Leu) + H(+). It carries out the reaction L-phenylalanyl-tRNA(Phe) + an N-terminal L-alpha-aminoacyl-[protein] = an N-terminal L-phenylalanyl-L-alpha-aminoacyl-[protein] + tRNA(Phe). Its function is as follows. Functions in the N-end rule pathway of protein degradation where it conjugates Leu, Phe and, less efficiently, Met from aminoacyl-tRNAs to the N-termini of proteins containing an N-terminal arginine or lysine. The polypeptide is Leucyl/phenylalanyl-tRNA--protein transferase (Oleidesulfovibrio alaskensis (strain ATCC BAA-1058 / DSM 17464 / G20) (Desulfovibrio alaskensis)).